An 83-amino-acid polypeptide reads, in one-letter code: Small ribosomal subunit protein bS18 (83 aa).

It belongs to the bacterial ribosomal protein bS18 family. As to quaternary structure, part of the 30S ribosomal subunit. Forms a tight heterodimer with protein bS6.

In terms of biological role, binds as a heterodimer with protein bS6 to the central domain of the 16S rRNA, where it helps stabilize the platform of the 30S subunit. This chain is Small ribosomal subunit protein bS18, found in Desulfosudis oleivorans (strain DSM 6200 / JCM 39069 / Hxd3) (Desulfococcus oleovorans).